The sequence spans 446 residues: 6-methylsalicylate 1-monooxygenase atA (446 aa).

A helical membrane pass occupies residues 7–27; that stretch reads VSVAIIGGGIGGLSLAIGLLQ. Residues E37 and A50 each contribute to the FAD site. The N-linked (GlcNAc...) asparagine glycan is linked to N107. R116 contributes to the FAD binding site. The active site involves R200. Residues D311 and A324 each contribute to the FAD site.

This sequence belongs to the paxM FAD-dependent monooxygenase family. FAD serves as cofactor.

The protein localises to the membrane. The catalysed reaction is 6-methylsalicylate + AH2 + O2 + H(+) = 3-methylcatechol + A + CO2 + H2O. It participates in secondary metabolite biosynthesis. 6-methylsalicylate 1-monooxygenase; part of the gene cluster that mediates the biosynthesis of terreic acid, a quinone epoxide inhibitor of Bruton's tyrosine kinase. The first step of the pathway is the synthesis of 6-methylsalicylic acid (6-MSA) by the 6-methylsalicylic acid synthase atX. In the biosynthesis of 6-MSA, atX utilizes one acetyl-CoA and three malonyl-CoAs as its substrates and catalyzes a series of programmed reactions including Claisen condensation, reduction, aldol cyclization, and the hydrolytic cleavage that yields 6-MSA. The 6-methylsalicylate 1-monooxygenase atA then catalyzes the decarboxylative hydroxylation of 6-MSA to 3-methylcatechol. The next step is the conversion of 3-methylcatechol to 3-methyl-1,2,4-benzenetriol by cytochrome P450 monooxygenase atE, which is enhanced by cytochrome P450 monooxygenase atG. Then, the epoxidase atD catalyzes the epoxidation and hydroxyl oxidation of 3-methyl-1,2,4-benzenetriol to terremutin. Lastly, GMC oxidoreductase atC oxidizes terremutin to terreic acid. This is 6-methylsalicylate 1-monooxygenase atA from Aspergillus terreus (strain NIH 2624 / FGSC A1156).